We begin with the raw amino-acid sequence, 185 residues long: Ribosome-recycling factor (185 aa).

The protein belongs to the RRF family.

Its subcellular location is the cytoplasm. Functionally, responsible for the release of ribosomes from messenger RNA at the termination of protein biosynthesis. May increase the efficiency of translation by recycling ribosomes from one round of translation to another. The sequence is that of Ribosome-recycling factor from Buchnera aphidicola subsp. Acyrthosiphon pisum (strain Tuc7).